The primary structure comprises 421 residues: L-Ala-D/L-amino acid epimerase (421 aa).

Substrate is bound by residues Thr193 and 218–220 (KLK). The Mg(2+) site is built by Asp247, Glu275, and Asp304. Substrate is bound by residues Lys328 and 380-382 (DLD).

This sequence belongs to the mandelate racemase/muconate lactonizing enzyme family. It depends on Mg(2+) as a cofactor.

Catalyzes the epimerization of various hydrophobic and polar dipeptides. Has epimerase activity with L-Ala-L-Ala, L-Ala-L-Ser, L-Ala-L-Thr and L-Ala-L-Trp (in vitro). This Populus trichocarpa (Western balsam poplar) protein is L-Ala-D/L-amino acid epimerase.